The following is a 118-amino-acid chain: uncharacterized protein (118 aa).

The next 4 membrane-spanning stretches (helical) occupy residues 5 to 20 (IVFY…SVVM), 25 to 42 (VIRT…LLYF), 53 to 73 (ALAI…FIIL), and 83 to 103 (LFFT…SLSI).

The protein localises to the cell membrane. This is an uncharacterized protein from Bacillus subtilis (strain 168).